The sequence spans 152 residues: MSSLAFNYIVNLLSHREYSEFELRNKMQEKNFSEEEIDEALSRCQAKNWQSDRRFSENYLNSRAQKGYGVGRIRQELRQLKGVSSDIIDEVLMESEIDWYEMAENLLRKKFPNYNEQQTPKMKQKIWQYMLSHGFRSDEFADLIGQNQSEWD.

Belongs to the RecX family.

The protein localises to the cytoplasm. Functionally, modulates RecA activity. In Haemophilus influenzae (strain PittGG), this protein is Regulatory protein RecX.